Reading from the N-terminus, the 644-residue chain is Interleukin-23 receptor (644 aa).

The first 23 residues, 1–23 (MSHLTLQLHVVIALYVLFRWCHG), serve as a signal peptide directing secretion. Over 24–374 (GITSINCSGD…PASGNHQDIG (351 aa)) the chain is Extracellular. N-linked (GlcNAc...) asparagine glycosylation is found at asparagine 47, asparagine 130, and asparagine 232. Fibronectin type-III domains follow at residues 127–217 (APSN…LDDI) and 219–318 (IPSA…TSQE). Residues 375–395 (LLSGMVFLAIMLPIFSLIGIF) traverse the membrane as a helical segment. The Cytoplasmic segment spans residues 396 to 644 (NRSLRIGIKR…HFSRISLFQK (249 aa)).

The protein belongs to the type I cytokine receptor family. Type 2 subfamily. In terms of assembly, heterodimer with IL12RB1. In presence of IL23, the heterodimer forms the IL23 receptor. Interacts with JAK2 and in presence of IL23 with STAT3. Post-translationally, phosphorylated in response to IL23. Expressed by Th1, Th2 and dendritic cells.

The protein resides in the cell membrane. Associates with IL12RB1 to form the interleukin-23 receptor. Binds IL23 and mediates T-cells, NK cells and possibly certain macrophage/myeloid cells stimulation probably through activation of the Jak-Stat signaling cascade. IL23 functions in innate and adaptive immunity and may participate in acute response to infection in peripheral tissues. IL23 may be responsible for autoimmune inflammatory diseases and be important for tumorigenesis. This Mus musculus (Mouse) protein is Interleukin-23 receptor (Il23r).